A 470-amino-acid chain; its full sequence is 1-aminocyclopropane-1-carboxylate synthase 9 (470 aa).

Residues E47 and Y85 each contribute to the substrate site. K272 is subject to N6-(pyridoxal phosphate)lysine.

Belongs to the class-I pyridoxal-phosphate-dependent aminotransferase family. In terms of assembly, homodimer and heterodimer. In vivo, the relevance of heterodimerization with other ACS enzymes is however unsure. Interacts (via its C-terminal region) with FEI1, FEI2, ETO1 and EOL1. The cofactor is pyridoxal 5'-phosphate. Post-translationally, may be processed at its C-terminus. In terms of tissue distribution, expressed in roots and siliques.

The catalysed reaction is S-adenosyl-L-methionine = 1-aminocyclopropane-1-carboxylate + S-methyl-5'-thioadenosine + H(+). Its pathway is alkene biosynthesis; ethylene biosynthesis via S-adenosyl-L-methionine; ethylene from S-adenosyl-L-methionine: step 1/2. In terms of biological role, 1-aminocyclopropane-1-carboxylate synthase (ACS) enzymes catalyze the conversion of S-adenosyl-L-methionine (SAM) into 1-aminocyclopropane-1-carboxylate (ACC), a direct precursor of ethylene. This Arabidopsis thaliana (Mouse-ear cress) protein is 1-aminocyclopropane-1-carboxylate synthase 9 (ACS9).